The primary structure comprises 317 residues: Melanocyte-stimulating hormone receptor (317 aa).

Residues 1-26 (MPVQGSPRSLLGAVNSTPTATPHLRP) form a disordered region. Over 1–37 (MPVQGSPRSLLGAVNSTPTATPHLRPAANQTGPQCLE) the chain is Extracellular. The N-linked (GlcNAc...) asparagine glycan is linked to Asn-29. The chain crosses the membrane as a helical span at residues 38–63 (VSIPDGLFLCLGLVSLVENTLVVAAI). Over 64 to 72 (AKNRNLHSP) the chain is Cytoplasmic. A helical membrane pass occupies residues 73–93 (MYCFVCCLALSDLLVSVSSVL). At 94–118 (ETAVLLLLGAGALAAQATVVQLLGN) the chain is on the extracellular side. A helical transmembrane segment spans residues 119-140 (VIDVLLCSSMVSSLFFLGAIAM). Residues 141–163 (DRYISIFYALRYHSIVTLARARR) lie on the Cytoplasmic side of the membrane. A helical membrane pass occupies residues 164 to 183 (AIAAIWAASMLSSTLFIAYC). Over 184-191 (DHTAALLC) the chain is Extracellular. A helical transmembrane segment spans residues 192–211 (LVVFFLAMLVLMAVLYVHML). Topologically, residues 212–240 (TQACQHAQGIARLHKRQRPVQQGWGLKGA) are cytoplasmic. A helical membrane pass occupies residues 241–266 (ATLAILLGVFFLCWGPFFLHLTLIAV). Over 267–279 (CPQHPTCSCIFKN) the chain is Extracellular. A helical membrane pass occupies residues 280–300 (FRLFLALIVCNAIVDPLIYAF). Residues 301-317 (RSQELCKTLKELLLFSW) lie on the Cytoplasmic side of the membrane.

The protein belongs to the G-protein coupled receptor 1 family. Interacts with MGRN1, but does not undergo MGRN1-mediated ubiquitination; this interaction competes with GNAS-binding and thus inhibits agonist-induced cAMP production. Interacts with OPN3; the interaction results in a decrease in MC1R-mediated cAMP signaling and ultimately a decrease in melanin production in melanocytes.

It localises to the cell membrane. Its function is as follows. Receptor for MSH (alpha, beta and gamma) and ACTH. The activity of this receptor is mediated by G proteins which activate adenylate cyclase. Mediates melanogenesis, the production of eumelanin (black/brown) and phaeomelanin (red/yellow), via regulation of cAMP signaling in melanocytes. This is Melanocyte-stimulating hormone receptor (MC1R) from Hapalemur griseus (Gray gentle lemur).